A 125-amino-acid polypeptide reads, in one-letter code: MADLAKIVEDLSSLTVLEAAELSKMLEEKWGVSAAAPVAVAAAGGAAAPAAAAEEKTEFDVVLADAGAQKINVIKEVRAITGLGLKEAKDLVEGAPKPVKEGVAKDEAEKIKAQLEGAGAKVELK.

This sequence belongs to the bacterial ribosomal protein bL12 family. In terms of assembly, homodimer. Part of the ribosomal stalk of the 50S ribosomal subunit. Forms a multimeric L10(L12)X complex, where L10 forms an elongated spine to which 2 to 4 L12 dimers bind in a sequential fashion. Binds GTP-bound translation factors.

Its function is as follows. Forms part of the ribosomal stalk which helps the ribosome interact with GTP-bound translation factors. Is thus essential for accurate translation. This is Large ribosomal subunit protein bL12 from Chelativorans sp. (strain BNC1).